Here is a 464-residue protein sequence, read N- to C-terminus: Argininosuccinate lyase (464 aa).

It belongs to the lyase 1 family. Argininosuccinate lyase subfamily.

The protein localises to the cytoplasm. The catalysed reaction is 2-(N(omega)-L-arginino)succinate = fumarate + L-arginine. It functions in the pathway amino-acid biosynthesis; L-arginine biosynthesis; L-arginine from L-ornithine and carbamoyl phosphate: step 3/3. The protein is Argininosuccinate lyase of Crocosphaera subtropica (strain ATCC 51142 / BH68) (Cyanothece sp. (strain ATCC 51142)).